Reading from the N-terminus, the 1195-residue chain is Voltage-gated inwardly rectifying potassium channel KCNH7 (1195 aa).

The Cytoplasmic portion of the chain corresponds to 1 to 412 (MPVRRGHVAP…YSPFKAVWDW (412 aa)). Residues 41–70 (IIYCNDGFCEMTGFSRPDVMQKPCTCDFLH) form the PAS domain. One can recognise a PAC domain in the interval 92–144 (RKVEVTYYHKNGSTFICNTHIIPVKNQEGVAMMFIINFEYVTDEENAATPERV). A Phosphoserine modification is found at S174. Residues 194-216 (SVAMKHFKSPTKESCSPSEADDT) are disordered. 2 positions are modified to phosphoserine: S238 and S319. Residues 413 to 433 (LILLLVIYTAIFTPYSAAFLL) form a helical membrane-spanning segment. Residues 434 to 449 (NDREEQKRRECGYSCS) lie on the Extracellular side of the membrane. Residues 450-470 (PLNVVDLIVDIMFIIDILINF) form a helical membrane-spanning segment. Over 471–494 (RTTYVNQNEEVVSDPAKIAIHYFK) the chain is Cytoplasmic. The helical transmembrane segment at 495–515 (GWFLIDMVAAIPFDLLIFGSG) threads the bilayer. Residues 516 to 521 (SDETTT) are Extracellular-facing. Residues 522–542 (LIGLLKTARLLRLVRVARKLD) traverse the membrane as a helical; Voltage-sensor segment. Residues 543–549 (RYSEYGA) lie on the Cytoplasmic side of the membrane. Residues 550–570 (AVLMLLMCIFALIAHWLACIW) traverse the membrane as a helical segment. Over 571–614 (YAIGNVERPYLTDKIGWLDSLGTQIGKRYNDSDSSSGPSIKDKY) the chain is Extracellular. N-linked (GlcNAc...) asparagine glycosylation occurs at N600. Positions 615 to 635 (VTALYFTFSSLTSVGFGNVSP) form an intramembrane region, pore-forming. The Selectivity filter motif lies at 627–632 (SVGFGN). Residues 636–641 (NTNSEK) lie on the Extracellular side of the membrane. The helical transmembrane segment at 642 to 662 (IFSICVMLIGSLMYASIFGNV) threads the bilayer. Over 663–1195 (SAIIQRLYSG…HVSDPGLPGK (533 aa)) the chain is Cytoplasmic. Positions 745–845 (AFRGASKGCL…IQREDLLEVL (101 aa)) are cNMP-binding domain. The tract at residues 870-915 (AKSQSVNDSEGDTGKLRRRRLSFESEGEKDFSKENSANDADDSTDT) is disordered. A compositionally biased stretch (basic and acidic residues) spans 890–902 (LSFESEGEKDFSK). S891 and S894 each carry phosphoserine. The stretch at 1027–1054 (YGEVEQRLDLLQEQLNRLESQMTTDIQA) forms a coiled coil.

The protein belongs to the potassium channel family. H (Eag) (TC 1.A.1.20) subfamily. Kv11.3/KCNH7 sub-subfamily. The potassium channel is probably composed of a homo- or heterotetrameric complex of pore-forming alpha subunits that can associate only within their subfamily.

The protein resides in the cell membrane. It carries out the reaction K(+)(in) = K(+)(out). In terms of biological role, pore-forming (alpha) subunit of voltage-gated inwardly rectifying potassium channel. Exhibits faster activation and deactivation kinetics and slow inactivation at membrane potentials positive to 240 mV, resulting in the weakest inward rectification. This chain is Voltage-gated inwardly rectifying potassium channel KCNH7, found in Mus musculus (Mouse).